The sequence spans 352 residues: Very-long-chain 3-oxoacyl-CoA reductase (352 aa).

A helical transmembrane segment spans residues 20 to 40 (TLWFIFIFGLLKLVPFALRFL). Residues Val66, Asp120, Asn147, Tyr228, Lys232, Val261, and Ser263 each coordinate NADP(+). Residue Tyr228 is the Proton donor of the active site. The active-site Lowers pKa of active site Tyr is the Lys232.

Belongs to the short-chain dehydrogenases/reductases (SDR) family.

It localises to the endoplasmic reticulum membrane. The enzyme catalyses a very-long-chain (3R)-3-hydroxyacyl-CoA + NADP(+) = a very-long-chain 3-oxoacyl-CoA + NADPH + H(+). The protein operates within lipid metabolism; fatty acid biosynthesis. Its function is as follows. Component of the microsomal membrane bound fatty acid elongation system, which produces the 26-carbon very long-chain fatty acids (VLCFA) from palmitate. Catalyzes the reduction of the 3-ketoacyl-CoA intermediate that is formed in each cycle of fatty acid elongation. VLCFAs serve as precursors for ceramide and sphingolipids. The chain is Very-long-chain 3-oxoacyl-CoA reductase from Candida glabrata (strain ATCC 2001 / BCRC 20586 / JCM 3761 / NBRC 0622 / NRRL Y-65 / CBS 138) (Yeast).